The sequence spans 173 residues: Inorganic pyrophosphatase (173 aa).

Residues Lys28, Arg42, and Tyr54 each coordinate substrate. Mg(2+) contacts are provided by Asp64, Asp69, and Asp101. Position 140 (Tyr140) interacts with substrate.

This sequence belongs to the PPase family. As to quaternary structure, homohexamer. It depends on Mg(2+) as a cofactor.

It localises to the cytoplasm. It catalyses the reaction diphosphate + H2O = 2 phosphate + H(+). Catalyzes the hydrolysis of inorganic pyrophosphate (PPi) forming two phosphate ions. The sequence is that of Inorganic pyrophosphatase from Helicobacter pylori (strain J99 / ATCC 700824) (Campylobacter pylori J99).